A 93-amino-acid chain; its full sequence is Small ribosomal subunit protein bS6 (93 aa).

This sequence belongs to the bacterial ribosomal protein bS6 family.

Functionally, binds together with bS18 to 16S ribosomal RNA. The sequence is that of Small ribosomal subunit protein bS6 (rpsF) from Treponema pallidum (strain Nichols).